Reading from the N-terminus, the 394-residue chain is Immune-associated nucleotide-binding protein 12 (394 aa).

The AIG1-type G domain maps to 45–251 (KPARTLLLVG…YMADLSHEIR (207 aa)). The tract at residues 54–61 (GRSGNGKS) is G1. Residues 54–62 (GRSGNGKSA) and Ser-75 each bind GTP. Residues 81–85 (GVTTA) form a G2 region. Residues 103 to 106 (DTPG) form a G3 region. The segment at 173-176 (TNED) is G4. Residues 210–212 (RNR) form a G5 region. A GTP-binding site is contributed by Asn-211. The stretch at 289–387 (NQQLRQMMER…KQMATDLQKS (99 aa)) forms a coiled coil.

Belongs to the TRAFAC class TrmE-Era-EngA-EngB-Septin-like GTPase superfamily. AIG1/Toc34/Toc159-like paraseptin GTPase family. IAN subfamily.

The chain is Immune-associated nucleotide-binding protein 12 from Arabidopsis thaliana (Mouse-ear cress).